The following is a 192-amino-acid chain: Probable GTP-binding protein EngB (192 aa).

One can recognise an EngB-type G domain in the interval 22 to 192 (QLPEIVFVGR…LLEQLAIYTG (171 aa)). GTP-binding positions include 30 to 37 (GRSNVGKS), 57 to 61 (GKTQL), 75 to 78 (DLPG), 142 to 145 (TKYD), and 172 to 174 (YSA). Residues Ser37 and Thr59 each coordinate Mg(2+).

This sequence belongs to the TRAFAC class TrmE-Era-EngA-EngB-Septin-like GTPase superfamily. EngB GTPase family. Mg(2+) serves as cofactor.

Necessary for normal cell division and for the maintenance of normal septation. The protein is Probable GTP-binding protein EngB of Chlorobium phaeobacteroides (strain BS1).